Consider the following 406-residue polypeptide: Tryptophan synthase beta chain (406 aa).

At Lys-95 the chain carries N6-(pyridoxal phosphate)lysine.

It belongs to the TrpB family. In terms of assembly, tetramer of two alpha and two beta chains. It depends on pyridoxal 5'-phosphate as a cofactor.

The catalysed reaction is (1S,2R)-1-C-(indol-3-yl)glycerol 3-phosphate + L-serine = D-glyceraldehyde 3-phosphate + L-tryptophan + H2O. The protein operates within amino-acid biosynthesis; L-tryptophan biosynthesis; L-tryptophan from chorismate: step 5/5. The beta subunit is responsible for the synthesis of L-tryptophan from indole and L-serine. This chain is Tryptophan synthase beta chain, found in Pseudomonas fluorescens (strain ATCC BAA-477 / NRRL B-23932 / Pf-5).